The sequence spans 513 residues: MQLNPSEISELIKAKIENLGASSELRTQGTIVSVTDGIVRIHGLSDVMSGEMIEMPGNTFGVALNLERDSVGAVILGDYEHIKEGDVAKCTGRILEVPVGRGLLGRVVNSLGQPIDGKGPIAADSSMPIERIAPGVIERKSVDQPVQTGLKSIDAMVPVGRGQRELIIGDRQTGKTAVAIDAIINQKGTGVKCIYVAVGQKASSVANVVRKLEEHGAMEHTIVVAATASDAAAMQYIAPYSGCTMGEYFRDIGEDALIVYDDLTKQAWAYRQVSLLLRRPPGREAYPGDVFYLHSRLLERAARVNADYVEKLTGGAVKGKTGSLTALPIIETQAGDVSAFVPTNVISITDGQIFLETDLFNAGIRPAINAGLSVSRVGGAAQTKVVKKLGGGVRLALAQYRELAAFAQFASDLDEATRKQLERGRRVTELMKQAQYSPMSVSQMALTLFAVNNGYMDEVEVNKILAFEAALQAFMKSKYAAIMDTIETSGNLDGETEKALTAAVEEFKKTGVY.

169–176 (GDRQTGKT) is an ATP binding site.

The protein belongs to the ATPase alpha/beta chains family. F-type ATPases have 2 components, CF(1) - the catalytic core - and CF(0) - the membrane proton channel. CF(1) has five subunits: alpha(3), beta(3), gamma(1), delta(1), epsilon(1). CF(0) has three main subunits: a(1), b(2) and c(9-12). The alpha and beta chains form an alternating ring which encloses part of the gamma chain. CF(1) is attached to CF(0) by a central stalk formed by the gamma and epsilon chains, while a peripheral stalk is formed by the delta and b chains.

Its subcellular location is the cell inner membrane. It carries out the reaction ATP + H2O + 4 H(+)(in) = ADP + phosphate + 5 H(+)(out). Its function is as follows. Produces ATP from ADP in the presence of a proton gradient across the membrane. The alpha chain is a regulatory subunit. The protein is ATP synthase subunit alpha of Thiobacillus denitrificans (strain ATCC 25259 / T1).